We begin with the raw amino-acid sequence, 273 residues long: MANCFVGDIQGCYDDLRRLLDLAEFDPANDVLWLCGDLVARGPDSLNTLRFVKGLGNRAVTVLGNHDLHLLAVADGVAPLKKKDKLQELMEAPDRDELLEWLRHRPLLAEHPDLPIMMVHAGISPAWDARTARNCAREVESLLRGDQYQWLLHNMYGDQPDGWQDDLVGIERYRYIINTFTRMRFCYFDGRLDFKCKKGPKESTPGLRPWFEQREHHVDDPILVFGHWAALMGNTGKQDIKALDTGCVWGNSLTLWRYEDDALIATPCPTYAK.

Belongs to the Ap4A hydrolase family.

The catalysed reaction is P(1),P(4)-bis(5'-adenosyl) tetraphosphate + H2O = 2 ADP + 2 H(+). Hydrolyzes diadenosine 5',5'''-P1,P4-tetraphosphate to yield ADP. This chain is Bis(5'-nucleosyl)-tetraphosphatase, symmetrical, found in Aeromonas hydrophila subsp. hydrophila (strain ATCC 7966 / DSM 30187 / BCRC 13018 / CCUG 14551 / JCM 1027 / KCTC 2358 / NCIMB 9240 / NCTC 8049).